The chain runs to 245 residues: Ribonuclease PH (245 aa).

Phosphate is bound by residues R86 and G124–R126.

It belongs to the RNase PH family. Homohexameric ring arranged as a trimer of dimers.

It carries out the reaction tRNA(n+1) + phosphate = tRNA(n) + a ribonucleoside 5'-diphosphate. Phosphorolytic 3'-5' exoribonuclease that plays an important role in tRNA 3'-end maturation. Removes nucleotide residues following the 3'-CCA terminus of tRNAs; can also add nucleotides to the ends of RNA molecules by using nucleoside diphosphates as substrates, but this may not be physiologically important. Probably plays a role in initiation of 16S rRNA degradation (leading to ribosome degradation) during starvation. This Bacillus cytotoxicus (strain DSM 22905 / CIP 110041 / 391-98 / NVH 391-98) protein is Ribonuclease PH.